We begin with the raw amino-acid sequence, 187 residues long: Large ribosomal subunit protein uL5 (187 aa).

Belongs to the universal ribosomal protein uL5 family. As to quaternary structure, part of the 50S ribosomal subunit; part of the 5S rRNA/L5/L18/L25 subcomplex. Contacts the 5S rRNA and the P site tRNA. Forms a bridge to the 30S subunit in the 70S ribosome.

Its function is as follows. This is one of the proteins that bind and probably mediate the attachment of the 5S RNA into the large ribosomal subunit, where it forms part of the central protuberance. In the 70S ribosome it contacts protein S13 of the 30S subunit (bridge B1b), connecting the 2 subunits; this bridge is implicated in subunit movement. Contacts the P site tRNA; the 5S rRNA and some of its associated proteins might help stabilize positioning of ribosome-bound tRNAs. The chain is Large ribosomal subunit protein uL5 from Malacoplasma penetrans (strain HF-2) (Mycoplasma penetrans).